We begin with the raw amino-acid sequence, 205 residues long: Thymidine kinase (205 aa).

ATP contacts are provided by residues 9–16 (SAMNAGKS) and 87–90 (DECQ). Glu88 (proton acceptor) is an active-site residue. Zn(2+)-binding residues include Cys145, Cys147, Cys182, and His185.

Belongs to the thymidine kinase family. As to quaternary structure, homotetramer.

Its subcellular location is the cytoplasm. It carries out the reaction thymidine + ATP = dTMP + ADP + H(+). Allosteric enzyme which is feedback inhibited by dTTP and activated by a number of dNDP and dNTP. Its function is as follows. Phosphorylates both thymidine and deoxyuridine. The polypeptide is Thymidine kinase (Escherichia coli O157:H7).